A 383-amino-acid chain; its full sequence is L-aspartate/L-glutamate decarboxylase (383 aa).

An N6-(pyridoxal phosphate)lysine modification is found at lysine 232.

Belongs to the group II decarboxylase family. MfnA subfamily. As to quaternary structure, monomer. It depends on pyridoxal 5'-phosphate as a cofactor.

It catalyses the reaction L-aspartate + H(+) = beta-alanine + CO2. The enzyme catalyses L-glutamate + H(+) = 4-aminobutanoate + CO2. The catalysed reaction is L-cysteate + H(+) = taurine + CO2. It carries out the reaction 3-sulfino-L-alanine + H(+) = hypotaurine + CO2. It participates in cofactor biosynthesis; coenzyme A biosynthesis. Its function is as follows. Catalyzes the decarboxylation of L-aspartate to produce beta-alanine, and the decarboxylation of L-glutamate to produce 4-aminobutanoate. Can also use cysteate and, to a lesser extent, cysteine sulfite (3-sulfino-L-alanine), but not L-tyrosine. Specific activities toward L-aspartate and cysteate are higher than toward L-glutamate. In Pyrococcus horikoshii (strain ATCC 700860 / DSM 12428 / JCM 9974 / NBRC 100139 / OT-3), this protein is L-aspartate/L-glutamate decarboxylase.